The primary structure comprises 808 residues: Phenylalanine--tRNA ligase beta subunit (808 aa).

In terms of domain architecture, tRNA-binding spans 40–149; sequence RPELDFVKIV…DQAEVGKTIR (110 aa). The B5 domain maps to 407–484; that stretch reads HKEVRIHTDI…RTKGYDTIQV (78 aa). Mg(2+) contacts are provided by aspartate 462, aspartate 468, glutamate 471, and glutamate 472. Residues 716–808 enclose the FDX-ACB domain; the sequence is SQFPEAEIDL…LAGKNGFVLR (93 aa).

The protein belongs to the phenylalanyl-tRNA synthetase beta subunit family. Type 1 subfamily. As to quaternary structure, tetramer of two alpha and two beta subunits. Mg(2+) serves as cofactor.

Its subcellular location is the cytoplasm. It carries out the reaction tRNA(Phe) + L-phenylalanine + ATP = L-phenylalanyl-tRNA(Phe) + AMP + diphosphate + H(+). In Leptospira interrogans serogroup Icterohaemorrhagiae serovar Lai (strain 56601), this protein is Phenylalanine--tRNA ligase beta subunit.